Consider the following 705-residue polypeptide: Elongation factor G (705 aa).

The region spanning 8–290 (HRYRNIGIMA…GVIHLLPSPA (283 aa)) is the tr-type G domain. GTP is bound by residues 17-24 (AHIDAGKT), 88-92 (DTPGH), and 142-145 (NKMD).

The protein belongs to the TRAFAC class translation factor GTPase superfamily. Classic translation factor GTPase family. EF-G/EF-2 subfamily.

It localises to the cytoplasm. Its function is as follows. Catalyzes the GTP-dependent ribosomal translocation step during translation elongation. During this step, the ribosome changes from the pre-translocational (PRE) to the post-translocational (POST) state as the newly formed A-site-bound peptidyl-tRNA and P-site-bound deacylated tRNA move to the P and E sites, respectively. Catalyzes the coordinated movement of the two tRNA molecules, the mRNA and conformational changes in the ribosome. The chain is Elongation factor G from Xylella fastidiosa (strain M23).